The following is a 104-amino-acid chain: Circadian clock oscillator protein KaiB (104 aa).

It belongs to the KaiB family. As to quaternary structure, the KaiABC complex composition changes during the circadian cycle to control KaiC phosphorylation. Complexes KaiC(6), KaiA(2-4):KaiC(6), KaiB(6):KaiC(6) and KaiC(6):KaiB(6):KaiA(12) are among the most important forms, many form cooperatively. Undergoes a major conformational rearrangment; in the free state forms homotetramers as a dimer of dimers. When bound to the CI domain of KaiC switches to a monomeric thioredoxin-fold (KaiB(fs)). KaiB(fs) binds CikA, leading it to dephosphorylate phospho-RpaA.

Its function is as follows. Key component of the KaiABC oscillator complex, which constitutes the main circadian regulator in cyanobacteria. Complex composition changes during the circadian cycle to control KaiC phosphorylation. KaiA stimulates KaiC autophosphorylation, while KaiB sequesters KaiA, leading to KaiC autodephosphorylation. Phospho-Ser-431 KaiC accumulation triggers binding of KaiB to form the KaiB(6):KaiC(6) complex, leading to changes in output regulators CikA and SasA. KaiB switches to a thioredoxin-like fold (KaiB(fs)) when bound to KaiC. KaiB(6):KaiC(6) formation exposes a site for KaiA binding that sequesters KaiA from KaiC, making the KaiC(6):KaiB(6):KaiA(12) complex that results in KaiC autodephosphorylation. Functionally, a metamorphic protein which reversibly switches between an inactive tetrameric fold and a rare, thioredoxin-like monomeric fold (KaiB(fs)). KaiB(fs) binds phospho-KaiC, KaiA and CikA. KaiA and CikA compete for binding to KaiB(fs), and KaiB(fs) and SasA compete for binding to KaiC, thus the clock oscillator and output signal pathway are tightly coupled. The sequence is that of Circadian clock oscillator protein KaiB from Rippkaea orientalis (strain PCC 8801 / RF-1) (Cyanothece sp. (strain PCC 8801)).